Consider the following 302-residue polypeptide: Recombination-associated protein RdgC (302 aa).

This sequence belongs to the RdgC family.

Its subcellular location is the cytoplasm. It is found in the nucleoid. Its function is as follows. May be involved in recombination. This is Recombination-associated protein RdgC from Actinobacillus pleuropneumoniae serotype 5b (strain L20).